Consider the following 281-residue polypeptide: Putative E3 ubiquitin-protein ligase SINA-like 6 (281 aa).

The disordered stretch occupies residues 1-26; the sequence is MVGVLLSERNGSQKRHCSSISSDDGR. Residues 45–81 form an RING-type zinc finger; it reads CPICYQALKIPVFQCGNGHLACSSCCPKLRNKCPACA. An SBD region spans residues 95-280; that stretch reads VLESVLVPCR…MMLCINELKQ (186 aa). The SIAH-type zinc-finger motif lies at 98–156; the sequence is SVLVPCRYADLGCTKTIYYGRESTHEKICNFSPCSCPVQGCNYTGSYKDLYEHYDLTHS. Positions 103, 110, 122, 126, 133, 138, 150, and 155 each coordinate Zn(2+).

Belongs to the SINA (Seven in absentia) family.

The catalysed reaction is S-ubiquitinyl-[E2 ubiquitin-conjugating enzyme]-L-cysteine + [acceptor protein]-L-lysine = [E2 ubiquitin-conjugating enzyme]-L-cysteine + N(6)-ubiquitinyl-[acceptor protein]-L-lysine.. It functions in the pathway protein modification; protein ubiquitination. Functionally, E3 ubiquitin-protein ligase that mediates ubiquitination and subsequent proteasomal degradation of target proteins. E3 ubiquitin ligases accept ubiquitin from an E2 ubiquitin-conjugating enzyme in the form of a thioester and then directly transfers the ubiquitin to targeted substrates. It probably triggers the ubiquitin-mediated degradation of different substrates. This Arabidopsis thaliana (Mouse-ear cress) protein is Putative E3 ubiquitin-protein ligase SINA-like 6.